We begin with the raw amino-acid sequence, 62 residues long: Sperm protamine P1 (62 aa).

A disordered region spans residues 1–62 (MARYRRHSRS…RRYSRRGRRR (62 aa)).

Belongs to the protamine P1 family. Testis.

The protein resides in the nucleus. It localises to the chromosome. Its function is as follows. Protamines substitute for histones in the chromatin of sperm during the haploid phase of spermatogenesis. They compact sperm DNA into a highly condensed, stable and inactive complex. This is Sperm protamine P1 (PRM1) from Pseudantechinus bilarni (Sandstone dibbler).